The primary structure comprises 269 residues: Energy-coupling factor transporter transmembrane protein EcfT (269 aa).

A run of 5 helical transmembrane segments spans residues 28-48 (MIIY…LLLL), 49-69 (AFTL…FNGV), 73-93 (IGII…GSVL), 109-129 (AILI…LTLT), and 246-266 (TLAI…KSPS).

The protein belongs to the energy-coupling factor EcfT family. As to quaternary structure, forms a stable energy-coupling factor (ECF) transporter complex composed of 2 membrane-embedded substrate-binding proteins (S component), 2 ATP-binding proteins (A component) and 2 transmembrane proteins (T component). May be able to interact with more than 1 S component at a time.

It is found in the cell membrane. Transmembrane (T) component of an energy-coupling factor (ECF) ABC-transporter complex. Unlike classic ABC transporters this ECF transporter provides the energy necessary to transport a number of different substrates. This chain is Energy-coupling factor transporter transmembrane protein EcfT, found in Streptococcus equi subsp. equi (strain 4047).